The primary structure comprises 469 residues: Adenosylhomocysteinase (469 aa).

Substrate-binding residues include threonine 63, aspartate 139, and glutamate 164. NAD(+) is bound at residue 165–167 (TTT). Substrate is bound by residues lysine 194 and aspartate 198. Residues asparagine 199, 228-233 (GYGDVG), glutamate 251, asparagine 300, 321-323 (IGH), and asparagine 375 each bind NAD(+).

It belongs to the adenosylhomocysteinase family. It depends on NAD(+) as a cofactor.

The protein localises to the cytoplasm. The catalysed reaction is S-adenosyl-L-homocysteine + H2O = L-homocysteine + adenosine. It functions in the pathway amino-acid biosynthesis; L-homocysteine biosynthesis; L-homocysteine from S-adenosyl-L-homocysteine: step 1/1. May play a key role in the regulation of the intracellular concentration of adenosylhomocysteine. The protein is Adenosylhomocysteinase of Pseudomonas putida (strain W619).